Here is a 98-residue protein sequence, read N- to C-terminus: Co-chaperonin GroES (98 aa).

Residues 32–56 (NAKEKPQQGEVLAVGPGRRDDEGKR) are disordered.

Belongs to the GroES chaperonin family. In terms of assembly, heptamer of 7 subunits arranged in a ring. Interacts with the chaperonin GroEL.

It localises to the cytoplasm. Functionally, together with the chaperonin GroEL, plays an essential role in assisting protein folding. The GroEL-GroES system forms a nano-cage that allows encapsulation of the non-native substrate proteins and provides a physical environment optimized to promote and accelerate protein folding. GroES binds to the apical surface of the GroEL ring, thereby capping the opening of the GroEL channel. The protein is Co-chaperonin GroES of Bifidobacterium animalis subsp. lactis (strain AD011).